The following is a 516-amino-acid chain: Bifunctional purine biosynthesis protein PurH (516 aa).

The MGS-like domain maps to 1-149; the sequence is MSERQPIRRA…KNHANVAVLT (149 aa).

This sequence belongs to the PurH family.

The enzyme catalyses (6R)-10-formyltetrahydrofolate + 5-amino-1-(5-phospho-beta-D-ribosyl)imidazole-4-carboxamide = 5-formamido-1-(5-phospho-D-ribosyl)imidazole-4-carboxamide + (6S)-5,6,7,8-tetrahydrofolate. It carries out the reaction IMP + H2O = 5-formamido-1-(5-phospho-D-ribosyl)imidazole-4-carboxamide. The protein operates within purine metabolism; IMP biosynthesis via de novo pathway; 5-formamido-1-(5-phospho-D-ribosyl)imidazole-4-carboxamide from 5-amino-1-(5-phospho-D-ribosyl)imidazole-4-carboxamide (10-formyl THF route): step 1/1. It functions in the pathway purine metabolism; IMP biosynthesis via de novo pathway; IMP from 5-formamido-1-(5-phospho-D-ribosyl)imidazole-4-carboxamide: step 1/1. The chain is Bifunctional purine biosynthesis protein PurH from Cutibacterium acnes (strain DSM 16379 / KPA171202) (Propionibacterium acnes).